The primary structure comprises 177 residues: Parathyroid hormone-related protein (177 aa).

Residues 1 to 24 (MLRRLVQQWSVLVFLLSYSVPSRG) form the signal peptide. A propeptide spanning residues 25-34 (RSVEGLGRRL) is cleaved from the precursor. Positions 57 to 68 (RFFLHHLIAEIH) are important for receptor binding. The disordered stretch occupies residues 74-177 (ATSEVSPNSK…TSLEPSSRTH (104 aa)). Positions 76–90 (SEVSPNSKPAPNTKN) are enriched in polar residues. Residues 108–129 (TNKVETYKEQPLKTPGKKKKGK) carry the Nuclear localization signal motif. Basic and acidic residues predominate over residues 109-118 (NKVETYKEQP). A compositionally biased stretch (basic residues) spans 122 to 132 (PGKKKKGKPGK). Positions 161–177 (PHTSPTSTSLEPSSRTH) are enriched in low complexity.

The protein belongs to the parathyroid hormone family. PTHrP interacts with PTH1R (via N-terminal extracellular domain). There are several secretory forms, including osteostatin, arising from endoproteolytic cleavage of the initial translation product. Each of these secretory forms is believed to have one or more of its own receptors that mediates the normal paracrine, autocrine and endocrine actions.

It localises to the secreted. The protein localises to the cytoplasm. Its subcellular location is the nucleus. Functionally, neuroendocrine peptide which is a critical regulator of cellular and organ growth, development, migration, differentiation and survival and of epithelial calcium ion transport. Acts by binding to its receptor, PTH1R, activating G protein-coupled receptor signaling. Regulates endochondral bone development and epithelial-mesenchymal interactions during the formation of the mammary glands and teeth. Required for skeletal homeostasis. Promotes mammary mesenchyme differentiation and bud outgrowth by modulating mesenchymal cell responsiveness to BMPs. Up-regulates BMPR1A expression in the mammary mesenchyme and this increases the sensitivity of these cells to BMPs and allows them to respond to BMP4 in a paracrine and/or autocrine fashion. BMP4 signaling in the mesenchyme, in turn, triggers epithelial outgrowth and augments MSX2 expression, which causes the mammary mesenchyme to inhibit hair follicle formation within the nipple sheath. Potent inhibitor of osteoclastic bone resorption. This chain is Parathyroid hormone-related protein (Pthlh), found in Rattus norvegicus (Rat).